The primary structure comprises 350 residues: Phosphotriesterase-related protein (350 aa).

Positions 22, 24, 169, 201, 230, and 298 each coordinate a divalent metal cation.

The protein belongs to the metallo-dependent hydrolases superfamily. Phosphotriesterase family. A divalent metal cation serves as cofactor.

This is Phosphotriesterase-related protein from Drosophila willistoni (Fruit fly).